A 496-amino-acid chain; its full sequence is Glutamate--tRNA ligase (496 aa).

The 'HIGH' region signature appears at 11 to 21 (PSPTGLLHIGN). The short motif at 255 to 259 (KLSKR) is the 'KMSKS' region element. Lysine 258 lines the ATP pocket.

Belongs to the class-I aminoacyl-tRNA synthetase family. Glutamate--tRNA ligase type 1 subfamily. Monomer.

The protein localises to the cytoplasm. It catalyses the reaction tRNA(Glu) + L-glutamate + ATP = L-glutamyl-tRNA(Glu) + AMP + diphosphate. Catalyzes the attachment of glutamate to tRNA(Glu) in a two-step reaction: glutamate is first activated by ATP to form Glu-AMP and then transferred to the acceptor end of tRNA(Glu). The polypeptide is Glutamate--tRNA ligase (Streptococcus pyogenes serotype M49 (strain NZ131)).